We begin with the raw amino-acid sequence, 5005 residues long: Bridge-like lipid transfer protein family member 1 (5005 aa).

A helical membrane pass occupies residues 27–47 (VVWLLVATILSCGWIIYLTYY). Disordered regions lie at residues 692–718 (RPAQ…PSEL) and 1205–1314 (KSVG…ASVC). A compositionally biased stretch (pro residues) spans 708-718 (SPRPPVDPSEL). Positions 1205–1215 (KSVGIEGERKT) are enriched in basic and acidic residues. The segment covering 1226-1240 (SHSSSSSSEENSSSS) has biased composition (low complexity). Over residues 1248-1275 (GEKESPSSAADDHSVQKDLLHSARRDDG) the composition is skewed to basic and acidic residues. Residues 1278–1303 (SVPTEISGTSPVSPNTQDKSVGQSPL) are compositionally biased toward polar residues. A phosphoserine mark is found at Ser-1301, Ser-1305, and Ser-1323. Residue Thr-1325 is modified to Phosphothreonine. Disordered regions lie at residues 1343-1376 (SDVS…SNSF), 1399-1425 (EEFE…QMQQ), 1521-1544 (TNKR…SEES), and 1676-1698 (FSEN…MIGT). Residues Ser-1355 and Ser-1406 each carry the phosphoserine modification. The segment covering 1521–1530 (TNKRTSKSSL) has biased composition (basic residues). The segment covering 1684 to 1693 (QDIRGTKTEH) has biased composition (basic and acidic residues). Phosphoserine is present on residues Ser-1805 and Ser-1808. Disordered stretches follow at residues 1927 to 1991 (RGGV…PLMP), 2165 to 2192 (PAQP…GGLQ), 2265 to 2288 (TSGD…KESP), 2367 to 2387 (ESPV…PNLP), 2400 to 2420 (SSDQ…QDDV), and 2598 to 2677 (TAGS…KDVV). 2 stretches are compositionally biased toward polar residues: residues 1931 to 1948 (LTSN…YNTD) and 1959 to 1971 (TSPS…NSVS). 3 stretches are compositionally biased toward polar residues: residues 2367–2379 (ESPV…NSLP), 2400–2418 (SSDQ…TSQD), and 2598–2608 (TAGSASPTPTF). Phosphoserine occurs at positions 2601 and 2603. Low complexity predominate over residues 2619–2638 (SDFSRSSRGSLNGGNRVNNA). The segment covering 2643 to 2665 (ANNENNKKESRNKNSLGRSERRT) has biased composition (basic and acidic residues). Position 2755 is a phosphoserine (Ser-2755). The tract at residues 2928–2967 (RQPSTAPQPMKEDIATPLPSEKTPTSVNQTPIETNEFPQL) is disordered. Over residues 2949–2964 (KTPTSVNQTPIETNEF) the composition is skewed to polar residues. Residues Ser-3562, Glu-3577, and Ser-3653 each carry the phosphoserine modification. Disordered stretches follow at residues 3614–3662 (YSRS…TFNI), 3686–3744 (SSNS…ERFY), 3821–3843 (RRSY…KKFQ), 3935–3954 (KTNT…KGKG), 4089–4145 (TTYP…SSSS), and 4325–4396 (QSAS…ASQQ). The span at 3686 to 3711 (SSNSEGSCSVFSSPKTTGGFSPSVPF) shows a compositional bias: polar residues. Residues 3727-3736 (EDSEKDEKDE) show a composition bias toward acidic residues. Basic and acidic residues predominate over residues 3821-3837 (RRSYDRSSRSLDQDSPS). Residues 4097-4112 (SPGSNAPQTGAKTSAS) are compositionally biased toward polar residues. A compositionally biased stretch (low complexity) spans 4117-4145 (PGSSGLGSPLGRSRHSSSQSDLTGSSSSS). Residue Ser-4124 is modified to Phosphoserine. Over residues 4325–4358 (QSASFTHMPQSPNVFNEHMTNNTMSPGTAAQSLK) the composition is skewed to polar residues. Positions 4359–4372 (SPASIRSRSVSDSS) are enriched in low complexity. The span at 4381-4396 (KTSTPVNKSNKAASQQ) shows a compositional bias: polar residues.

In terms of tissue distribution, highly expressed in testis and ovary. Weakly or not expressed in other tissues.

It is found in the cell membrane. Its subcellular location is the endoplasmic reticulum membrane. The protein localises to the mitochondrion membrane. Tube-forming lipid transport protein which provides phosphatidylethanolamine for glycosylphosphatidylinositol (GPI) anchor synthesis in the endoplasmic reticulum. Plays a role in endosomal trafficking and endosome recycling. Also involved in the actin cytoskeleton and cilia structural dynamics. Acts as a regulator of phagocytosis. In Mus musculus (Mouse), this protein is Bridge-like lipid transfer protein family member 1 (Bltp1).